The chain runs to 440 residues: UDP-N-acetylmuramoylalanine--D-glutamate ligase (440 aa).

128–134 (GTNGKTT) is an ATP binding site.

This sequence belongs to the MurCDEF family.

The protein localises to the cytoplasm. The catalysed reaction is UDP-N-acetyl-alpha-D-muramoyl-L-alanine + D-glutamate + ATP = UDP-N-acetyl-alpha-D-muramoyl-L-alanyl-D-glutamate + ADP + phosphate + H(+). It functions in the pathway cell wall biogenesis; peptidoglycan biosynthesis. In terms of biological role, cell wall formation. Catalyzes the addition of glutamate to the nucleotide precursor UDP-N-acetylmuramoyl-L-alanine (UMA). The polypeptide is UDP-N-acetylmuramoylalanine--D-glutamate ligase (Lawsonia intracellularis (strain PHE/MN1-00)).